The sequence spans 342 residues: S-methyl-5'-thioadenosine phosphorylase (342 aa).

Residues Thr-51, 99 to 100 (RH), and 132 to 133 (SA) each bind phosphate. Met-234 is a binding site for substrate. Residue Ser-235 coordinates phosphate. 258–260 (DYD) serves as a coordination point for substrate.

This sequence belongs to the PNP/MTAP phosphorylase family. MTAP subfamily. In terms of assembly, homotrimer.

The protein localises to the cytoplasm. Its subcellular location is the nucleus. The enzyme catalyses S-methyl-5'-thioadenosine + phosphate = 5-(methylsulfanyl)-alpha-D-ribose 1-phosphate + adenine. It functions in the pathway amino-acid biosynthesis; L-methionine biosynthesis via salvage pathway; S-methyl-5-thio-alpha-D-ribose 1-phosphate from S-methyl-5'-thioadenosine (phosphorylase route): step 1/1. In terms of biological role, catalyzes the reversible phosphorylation of S-methyl-5'-thioadenosine (MTA) to adenine and 5-methylthioribose-1-phosphate. Involved in the breakdown of MTA, a major by-product of polyamine biosynthesis. Responsible for the first step in the methionine salvage pathway after MTA has been generated from S-adenosylmethionine. Has broad substrate specificity with 6-aminopurine nucleosides as preferred substrates. The chain is S-methyl-5'-thioadenosine phosphorylase from Aspergillus fumigatus (strain ATCC MYA-4609 / CBS 101355 / FGSC A1100 / Af293) (Neosartorya fumigata).